A 490-amino-acid polypeptide reads, in one-letter code: ATP synthase subunit beta, chloroplastic (490 aa).

170-177 contacts ATP; the sequence is GGAGVGKT.

It belongs to the ATPase alpha/beta chains family. In terms of assembly, F-type ATPases have 2 components, CF(1) - the catalytic core - and CF(0) - the membrane proton channel. CF(1) has five subunits: alpha(3), beta(3), gamma(1), delta(1), epsilon(1). CF(0) has four main subunits: a(1), b(1), b'(1) and c(9-12).

The protein resides in the plastid. The protein localises to the chloroplast thylakoid membrane. The catalysed reaction is ATP + H2O + 4 H(+)(in) = ADP + phosphate + 5 H(+)(out). Produces ATP from ADP in the presence of a proton gradient across the membrane. The catalytic sites are hosted primarily by the beta subunits. The protein is ATP synthase subunit beta, chloroplastic of Cressa truxillensis (Spreading alkaliweed).